A 151-amino-acid chain; its full sequence is MQVILKEKVENLGVLGDIVNVKPGYARNFLIPFGKAVQATKANIETFEAQKAELEKAEKARFDAAVATAEAIKDKVYTIAAQAGEGGKLFGSVGTAEVAEAVSQASGKEIEKSQVRMPEGVIRSIGEFELTIHVYTDVDADIKVNVVASEA.

Belongs to the bacterial ribosomal protein bL9 family.

Functionally, binds to the 23S rRNA. This is Large ribosomal subunit protein bL9 from Francisella philomiragia subsp. philomiragia (strain ATCC 25017 / CCUG 19701 / FSC 153 / O#319-036).